The following is a 107-amino-acid chain: Large ribosomal subunit protein uL24 (107 aa).

This sequence belongs to the universal ribosomal protein uL24 family. Part of the 50S ribosomal subunit.

One of two assembly initiator proteins, it binds directly to the 5'-end of the 23S rRNA, where it nucleates assembly of the 50S subunit. Its function is as follows. One of the proteins that surrounds the polypeptide exit tunnel on the outside of the subunit. The polypeptide is Large ribosomal subunit protein uL24 (Fervidobacterium nodosum (strain ATCC 35602 / DSM 5306 / Rt17-B1)).